A 119-amino-acid chain; its full sequence is Holo-[acyl-carrier-protein] synthase (119 aa).

The Mg(2+) site is built by Asp-8 and Glu-58.

Belongs to the P-Pant transferase superfamily. AcpS family. It depends on Mg(2+) as a cofactor.

It is found in the cytoplasm. The catalysed reaction is apo-[ACP] + CoA = holo-[ACP] + adenosine 3',5'-bisphosphate + H(+). In terms of biological role, transfers the 4'-phosphopantetheine moiety from coenzyme A to a Ser of acyl-carrier-protein. In Bacillus thuringiensis subsp. konkukian (strain 97-27), this protein is Holo-[acyl-carrier-protein] synthase.